Reading from the N-terminus, the 425-residue chain is Serine--tRNA ligase (425 aa).

233–235 contributes to the L-serine binding site; the sequence is TAE. 264-266 is a binding site for ATP; sequence RRE. Glutamate 287 is a binding site for L-serine. Residue 351 to 354 coordinates ATP; it reads EISS. An L-serine-binding site is contributed by serine 385.

Belongs to the class-II aminoacyl-tRNA synthetase family. Type-1 seryl-tRNA synthetase subfamily. Homodimer. The tRNA molecule binds across the dimer.

The protein localises to the cytoplasm. The catalysed reaction is tRNA(Ser) + L-serine + ATP = L-seryl-tRNA(Ser) + AMP + diphosphate + H(+). The enzyme catalyses tRNA(Sec) + L-serine + ATP = L-seryl-tRNA(Sec) + AMP + diphosphate + H(+). Its pathway is aminoacyl-tRNA biosynthesis; selenocysteinyl-tRNA(Sec) biosynthesis; L-seryl-tRNA(Sec) from L-serine and tRNA(Sec): step 1/1. Its function is as follows. Catalyzes the attachment of serine to tRNA(Ser). Is also able to aminoacylate tRNA(Sec) with serine, to form the misacylated tRNA L-seryl-tRNA(Sec), which will be further converted into selenocysteinyl-tRNA(Sec). This Prochlorococcus marinus (strain MIT 9515) protein is Serine--tRNA ligase.